The chain runs to 134 residues: Small ribosomal subunit protein uS8 (134 aa).

This sequence belongs to the universal ribosomal protein uS8 family. Part of the 30S ribosomal subunit. Contacts proteins S5 and S12.

One of the primary rRNA binding proteins, it binds directly to 16S rRNA central domain where it helps coordinate assembly of the platform of the 30S subunit. This Sphingopyxis alaskensis (strain DSM 13593 / LMG 18877 / RB2256) (Sphingomonas alaskensis) protein is Small ribosomal subunit protein uS8.